Consider the following 321-residue polypeptide: MLNNEYKNSSLKIFSLKGNEALAQEVADQVGIELGKCSVKRFSDGEIQINIEESIRGCDVFIIQPTSYPVNLHLMELLIMIDACKRASAATINIVVPYYGYARQDRKARSRKPITAKLVANLIETAGATRMIALDLHAPQIQGFFDIPIDHLMGVPILAKHFKDDPNINPEECVVVSPDHGGVTRARKLADILKTPIAIIDKRRPRPNVAEVMNIVGEIEGRTAIIIDDIIDTAGTITLAAQALKDKGAKEVYACCTHPVLSGPAKERIENSAIKELIVTNSIHLDEDRKPSNTKELSVAGLIAQAIIRVYERESVSVLFD.

ATP contacts are provided by residues 44–46 (DGE) and 103–104 (RQ). Positions 137 and 179 each coordinate Mg(2+). Lysine 202 is an active-site residue. D-ribose 5-phosphate contacts are provided by residues arginine 204, aspartate 228, and 232–236 (DTAGT).

The protein belongs to the ribose-phosphate pyrophosphokinase family. Class I subfamily. Homohexamer. The cofactor is Mg(2+).

Its subcellular location is the cytoplasm. It carries out the reaction D-ribose 5-phosphate + ATP = 5-phospho-alpha-D-ribose 1-diphosphate + AMP + H(+). It participates in metabolic intermediate biosynthesis; 5-phospho-alpha-D-ribose 1-diphosphate biosynthesis; 5-phospho-alpha-D-ribose 1-diphosphate from D-ribose 5-phosphate (route I): step 1/1. Involved in the biosynthesis of the central metabolite phospho-alpha-D-ribosyl-1-pyrophosphate (PRPP) via the transfer of pyrophosphoryl group from ATP to 1-hydroxyl of ribose-5-phosphate (Rib-5-P). This is Ribose-phosphate pyrophosphokinase from Staphylococcus aureus (strain COL).